The primary structure comprises 854 residues: Envelope glycoprotein gp150 (854 aa).

The Extracellular segment spans residues 1–783 (MAEGFAANRQ…WIGNIPQYLK (783 aa)). 15 N-linked (GlcNAc...) asparagine; by host glycosylation sites follow: Asn-218, Asn-256, Asn-267, Asn-272, Asn-296, Asn-328, Asn-334, Asn-340, Asn-416, Asn-420, Asn-479, Asn-497, Asn-529, Asn-546, and Asn-549. Residues 614-634 (VMLALATVLSMAGAGTGATAI) form a fusion peptide region. A coiled-coil region spans residues 641-691 (QQVLATHQEAIEKVTEALKINNLRLVTLEHQVLVIGLKVEAMEKFLYTAFA). Residues 660–678 (INNLRLVTLEHQVLVIGLK) form an immunosuppression region. 4 N-linked (GlcNAc...) asparagine; by host glycosylation sites follow: Asn-715, Asn-719, Asn-727, and Asn-735. Residues 734–770 (YNQTKDLQQRFYEIIMDIEQNNVQGKKGLQQLQEWED) are a coiled coil. The helical transmembrane segment at 784 to 804 (GLLGGILGIGLGMLLLILCLP) threads the bilayer. Residues 805–854 (TLVDCIRNCIHKILGYTVIAMPEVEEEEIQPQMELRRNGRQCGMSEKEEE) lie on the Cytoplasmic side of the membrane.

As to quaternary structure, the mature envelope protein (Env) consists of a trimer of SU-TM heterodimers attached by noncovalent interactions or by a labile interchain disulfide bond. Specific enzymatic cleavages in vivo yield mature proteins. Envelope glycoproteins are synthesized as an inactive precursor that is N-glycosylated and processed likely by host cell furin or by a furin-like protease in the Golgi to yield the mature SU and TM proteins. The cleavage site between SU and TM requires the minimal sequence [KR]-X-[KR]-R.

Its subcellular location is the virion membrane. It localises to the host cell membrane. Functionally, the surface protein (SU) attaches the virus to the host cell by binding to its receptor. This interaction triggers the refolding of the transmembrane protein (TM) and is thought to activate its fusogenic potential by unmasking its fusion peptide. Fusion occurs at the host cell plasma membrane. In terms of biological role, the transmembrane protein (TM) acts as a class I viral fusion protein. Under the current model, the protein has at least 3 conformational states: pre-fusion native state, pre-hairpin intermediate state, and post-fusion hairpin state. During viral and target cell membrane fusion, the coiled coil regions (heptad repeats) assume a trimer-of-hairpins structure, positioning the fusion peptide in close proximity to the C-terminal region of the ectodomain. The formation of this structure appears to drive apposition and subsequent fusion of viral and target cell membranes. Membranes fusion leads to delivery of the nucleocapsid into the cytoplasm. This is Envelope glycoprotein gp150 (env) from Feline immunodeficiency virus (isolate Wo) (FIV).